A 471-amino-acid polypeptide reads, in one-letter code: Putative multidrug resistance protein MdtD (471 aa).

13 consecutive transmembrane segments (helical) span residues 12 to 32, 49 to 69, 77 to 97, 106 to 126, 138 to 158, 165 to 185, 197 to 217, 225 to 245, 263 to 285, 290 to 312, 342 to 362, 396 to 416, and 431 to 451; these read LWIV…VNTA, MVIV…GWLA, IFFT…QSST, VLQG…VMKI, FVTL…GLLV, WIFL…LWLM, FSGF…LDGY, AGLG…LWHA, FSLG…FMTP, IGLG…GSMG, LLFM…VMLF, MVMQ…LGAF, and IFFW…LVFA.

Belongs to the major facilitator superfamily. TCR/Tet family.

It localises to the cell inner membrane. This chain is Putative multidrug resistance protein MdtD, found in Cronobacter sakazakii (strain ATCC BAA-894) (Enterobacter sakazakii).